The chain runs to 313 residues: MEGIKVLAKQFGKIKTPQGLAVAIALITAIAWFPDGLAGFLPSLKSNPFQAIIGAILTILGLSIIFFLHKKLRRGQKDSIIAEFGFIVLTLIFSLIVFNDFAITQFITSSLVFFSAWLHVREMEIVDYTVREVRPSNVKATVIFLSSAKYDEKFKKLMEKVEEIPTINDFFDFLEKEKMRLPWEMQLRLINEFSRSLKYVYVIGSVNSSSGSFEQIEDFKLIVNKFFPQIEVIKYREGLDFENLEKNFGVLKEIYSELKTKGLKEREIIIDTTGGQKIQSIAGALYSTAYDRFFAYVSTNSKSVKVFDVVPTE.

3 helical membrane passes run 19–41 (GLAV…AGFL), 51–68 (AIIG…IFFL), and 81–103 (IAEF…DFAI).

It localises to the cell membrane. This is an uncharacterized protein from Aquifex aeolicus (strain VF5).